A 98-amino-acid chain; its full sequence is Small ribosomal subunit protein bS20 (98 aa).

The protein belongs to the bacterial ribosomal protein bS20 family.

In terms of biological role, binds directly to 16S ribosomal RNA. The polypeptide is Small ribosomal subunit protein bS20 (Kosmotoga olearia (strain ATCC BAA-1733 / DSM 21960 / TBF 19.5.1)).